We begin with the raw amino-acid sequence, 216 residues long: Small ribosomal subunit protein uS3c (216 aa).

Positions 43–115 (FENDWGTLYN…QTRIKVIQVN (73 aa)) constitute a KH type-2 domain.

It belongs to the universal ribosomal protein uS3 family. As to quaternary structure, part of the 30S ribosomal subunit.

The protein resides in the plastid. The protein localises to the chloroplast. This Emiliania huxleyi (Coccolithophore) protein is Small ribosomal subunit protein uS3c (rps3).